Consider the following 281-residue polypeptide: ATP synthase subunit a (281 aa).

Helical transmembrane passes span 56 to 76 (KPMLLALLGSIVIVGFFWAAF), 117 to 137 (LVVSLFFFVWMMNLWSIIPVA), 144 to 164 (IIAYPAVLAAIVYVTWITLTF), 181 to 201 (KSLGPVLPLAMLIEFFSNILI), 215 to 235 (FAGHTLLLLFTIASWYLLNGV), 237 to 257 (IAYAGVSFIMTVVMTAFELFI), and 259 to 279 (ALQAYVFVLLTCTYIQGAMAE).

This sequence belongs to the ATPase A chain family. As to quaternary structure, F-type ATPases have 2 components, CF(1) - the catalytic core - and CF(0) - the membrane proton channel. CF(1) has five subunits: alpha(3), beta(3), gamma(1), delta(1), epsilon(1). CF(0) has three main subunits: a(1), b(2) and c(9-12). The alpha and beta chains form an alternating ring which encloses part of the gamma chain. CF(1) is attached to CF(0) by a central stalk formed by the gamma and epsilon chains, while a peripheral stalk is formed by the delta and b chains.

The protein resides in the cell membrane. Functionally, key component of the proton channel; it plays a direct role in the translocation of protons across the membrane. The chain is ATP synthase subunit a from Streptomyces lividans.